A 679-amino-acid polypeptide reads, in one-letter code: MASKPDDDGFLAPYVSRSDAQRPLSIVSSRMTDIASEDGDGPEVQNNRLSIPQSTDMGSRPDTARTGASSSRGPWQSQSLRNKTYLAGVQAKRGSVESSTAGSTSQPPSLSSRSHVPSLQSHAFFRPMSSQKLQAQRGGSHRPSTMSQMSAAASPSSPTSPTSPTSPRSDEHGESSSSQMRQSIISNPIAQLQRQMSNEENMRPPPSRGTEMTEQETLDRITANTSPSHGHYPAGSLTDSVRPLQGMSSDTGHFQHSIIVDKSYKDLSNLPSPIKTPRSFRSSFLMPGRSNDGQLSQNRSTEGAEKLSSAASSPQFRPVDSHNEQQHPRVPYKPSQKSDLGRVHQYFDGNTVFCLGGRWQNTRGRPINIATGIFVVVPCALFFGFEAPWLWNNVSPAIPIVFAYLAYICFSSFIHASVTDPGILPRNLHQFPPVDDDDDPLQLSPPTTDWALIKSAESTTAAMEVPVKHCRTCNIWRPPRAHHCRLCDNCIETHDHHCVWLNNCVGKRNYRYFFTFVTSATVLAAYLIATSLTQILLYRNRQGISFGQAVDHFRVPFALVFLGFITFLYPAALMGYHIFLMARGETTREYMNSHKFAKKERFRAFSQASVFKNFIVVLCRPRQPTYYQFKAHYHEGDQRLGIRRDKRPRSSSQGLEMHDVNPGSSGFQGPVSLRNDTPH.

Disordered stretches follow at residues 1-181 (MASK…SQMR), 194-250 (RQMS…MSSD), and 267-338 (LSNL…SQKS). Topologically, residues 1–368 (MASKPDDDGF…WQNTRGRPIN (368 aa)) are cytoplasmic. Polar residues-rich tracts occupy residues 44–57 (VQNNRLSIPQSTDM) and 66–82 (TGASSSRGPWQSQSLRN). 2 stretches are compositionally biased toward low complexity: residues 103 to 114 (STSQPPSLSSRS) and 143 to 167 (PSTMSQMSAAASPSSPTSPTSPTSP). Residues 291–301 (NDGQLSQNRST) show a composition bias toward polar residues. The helical transmembrane segment at 369-389 (IATGIFVVVPCALFFGFEAPW) threads the bilayer. Residues 390–393 (LWNN) lie on the Lumenal side of the membrane. The helical transmembrane segment at 394–414 (VSPAIPIVFAYLAYICFSSFI) threads the bilayer. Residues 415–511 (HASVTDPGIL…NNCVGKRNYR (97 aa)) are Cytoplasmic-facing. Positions 468–518 (KHCRTCNIWRPPRAHHCRLCDNCIETHDHHCVWLNNCVGKRNYRYFFTFVT) constitute a DHHC domain. C498 (S-palmitoyl cysteine intermediate) is an active-site residue. Residues 512–532 (YFFTFVTSATVLAAYLIATSL) form a helical membrane-spanning segment. Residues 533–554 (TQILLYRNRQGISFGQAVDHFR) are Lumenal-facing. A helical membrane pass occupies residues 555 to 575 (VPFALVFLGFITFLYPAALMG). Over 576-679 (YHIFLMARGE…PVSLRNDTPH (104 aa)) the chain is Cytoplasmic. The tract at residues 640 to 679 (LGIRRDKRPRSSSQGLEMHDVNPGSSGFQGPVSLRNDTPH) is disordered.

It belongs to the DHHC palmitoyltransferase family. ERF2/ZDHHC9 subfamily. Post-translationally, autopalmitoylated.

It is found in the endoplasmic reticulum membrane. The enzyme catalyses L-cysteinyl-[protein] + hexadecanoyl-CoA = S-hexadecanoyl-L-cysteinyl-[protein] + CoA. In terms of biological role, palmitoyltransferase specific for Ras proteins. This is Palmitoyltransferase ERF2 (ERF2) from Gibberella zeae (strain ATCC MYA-4620 / CBS 123657 / FGSC 9075 / NRRL 31084 / PH-1) (Wheat head blight fungus).